The following is a 261-amino-acid chain: Global transcriptional regulator CodY (261 aa).

The interval 1 to 159 is GAF domain; sequence MANLLSKTRR…SSTVVGIQLL (159 aa). Positions 207 to 226 form a DNA-binding region, H-T-H motif; the sequence is ASVIADRIGITRSVIVNALR.

It belongs to the CodY family.

It is found in the cytoplasm. Its function is as follows. DNA-binding global transcriptional regulator which is involved in the adaptive response to starvation and acts by directly or indirectly controlling the expression of numerous genes in response to nutrient availability. During rapid exponential growth, CodY is highly active and represses genes whose products allow adaptation to nutrient depletion. In Streptococcus mutans serotype c (strain ATCC 700610 / UA159), this protein is Global transcriptional regulator CodY.